The primary structure comprises 150 residues: Small heat shock protein IbpB (150 aa).

Residues 26-137 (SQEPIDFPPY…QPQRIAIGGG (112 aa)) form the sHSP domain.

Belongs to the small heat shock protein (HSP20) family. As to quaternary structure, homodimer. Forms homomultimers of about 100-150 subunits at optimal growth temperatures. Conformation changes to oligomers at high temperatures or high ionic concentrations. The decrease in size of the multimers is accompanied by an increase in chaperone activity.

The protein localises to the cytoplasm. Associates with aggregated proteins, together with IbpA, to stabilize and protect them from irreversible denaturation and extensive proteolysis during heat shock and oxidative stress. Aggregated proteins bound to the IbpAB complex are more efficiently refolded and reactivated by the ATP-dependent chaperone systems ClpB and DnaK/DnaJ/GrpE. Its activity is ATP-independent. The sequence is that of Small heat shock protein IbpB from Pectobacterium atrosepticum (strain SCRI 1043 / ATCC BAA-672) (Erwinia carotovora subsp. atroseptica).